The following is a 320-amino-acid chain: Mitochondrial thiamine pyrophosphate carrier (320 aa).

3 Solcar repeats span residues 13-106, 116-202, and 214-309; these read NTKF…LTEL, REFS…LKHL, and NENL…FCNV. The chain crosses the membrane as a helical span at residues 19–39; that stretch reads AVAGSVSGLVTRALISPFDVI. Ser51 carries the post-translational modification Phosphoserine. Helical transmembrane passes span 87 to 107, 122 to 142, 173 to 193, and 220 to 240; these read ILSI…TELV, FVCG…VDVL, VFYK…GLQF, and LLCG…LDLF. The Substrate recognition signature appears at 241–246; that stretch reads KKRLQV. The helical transmembrane segment at 293-313 threads the bilayer; that stretch reads ALSTGFMFFWYEFFCNVFHCM.

Belongs to the mitochondrial carrier (TC 2.A.29) family.

The protein resides in the mitochondrion membrane. The catalysed reaction is thiamine phosphate(out) + thiamine diphosphate(in) = thiamine phosphate(in) + thiamine diphosphate(out). Its function is as follows. Mitochondrial transporter mediating uptake of thiamine diphosphate into mitochondria. It is not clear if the antiporter activity is affected by the membrane potential or by the proton electrochemical gradient. This Pongo abelii (Sumatran orangutan) protein is Mitochondrial thiamine pyrophosphate carrier (SLC25A19).